A 172-amino-acid polypeptide reads, in one-letter code: Adenine phosphoribosyltransferase (172 aa).

The protein belongs to the purine/pyrimidine phosphoribosyltransferase family. In terms of assembly, homodimer.

It localises to the cytoplasm. The catalysed reaction is AMP + diphosphate = 5-phospho-alpha-D-ribose 1-diphosphate + adenine. The protein operates within purine metabolism; AMP biosynthesis via salvage pathway; AMP from adenine: step 1/1. Functionally, catalyzes a salvage reaction resulting in the formation of AMP, that is energically less costly than de novo synthesis. This Pelobacter propionicus (strain DSM 2379 / NBRC 103807 / OttBd1) protein is Adenine phosphoribosyltransferase.